Consider the following 709-residue polypeptide: MAREFSLANTRNIGIMAHVDAGKTTTTERVLYYTGKIHKIGETHEGASQMDWMEQEQERGITITSAATTAEWKGNRVNIIDTPGHVDFTIEVQRSLRVLDGAVTVLDAQSGVEPQTETVWRQATEYGVPRIVFANKMDKIGADFYYSLSTLGDRLGANAHPIQIPIGAEDDFIGIIDLVTMKSEIYTNDLGTDIKETVVGSDEFNAELAALDFNAEEYTELANEWREKLIEAIADFDEDIMEKYFAGEEIPEAELKAAIRKATINVDFYPMLAGSAFKNKGVQMMLDAVIDYLPSPLDIPAIQGVNPDTDEEDERPASDEEPFAALAFKIMTDPFVGRLSFFRVYSGTLDAGSYVLNTSKGKRERIGRILQMHANTRKEIQTVYAGDIAAAVGLKNTTTGDSLTDEKAKIILESIEVPEPVIQLMVEPKTKADQDKMGVALQKLAEEDPTFRVETNPETGETVISGMGELHLDVLVDRMKREFKVEANVGAPQVAYRETFRAGTSARGFFKRQSGGKGQYGDVWIEFTPNEEGAGFEFENAIVGGVVPREFVPAVEKGLVETMANGVLAGYPMVDIKAKLYDGSYHDVDSSETAFKVAASLAMKEAAKTAKPAILEPMMKVTITVPEENLGDIMGHVTARRGQVNSMEAHGKSQIVNAFVPLAEMFGYATTLRSSTQGRGTFMMVFDHYSDVPKSVQEEIIAKNGRNAD.

The tr-type G domain occupies 8–297 (ANTRNIGIMA…AVIDYLPSPL (290 aa)). Residues 17–24 (AHVDAGKT), 81–85 (DTPGH), and 135–138 (NKMD) contribute to the GTP site.

Belongs to the TRAFAC class translation factor GTPase superfamily. Classic translation factor GTPase family. EF-G/EF-2 subfamily.

The protein resides in the cytoplasm. In terms of biological role, catalyzes the GTP-dependent ribosomal translocation step during translation elongation. During this step, the ribosome changes from the pre-translocational (PRE) to the post-translocational (POST) state as the newly formed A-site-bound peptidyl-tRNA and P-site-bound deacylated tRNA move to the P and E sites, respectively. Catalyzes the coordinated movement of the two tRNA molecules, the mRNA and conformational changes in the ribosome. The protein is Elongation factor G of Lactococcus lactis subsp. lactis (strain IL1403) (Streptococcus lactis).